Reading from the N-terminus, the 213-residue chain is Orotate phosphoribosyltransferase (213 aa).

Position 26 (K26) interacts with 5-phospho-alpha-D-ribose 1-diphosphate. 34 to 35 (FF) provides a ligand contact to orotate. 5-phospho-alpha-D-ribose 1-diphosphate-binding positions include 72-73 (YK), R99, K100, K103, H105, and 124-132 (DDVITAGTA). Residues T128 and R156 each contribute to the orotate site.

Belongs to the purine/pyrimidine phosphoribosyltransferase family. PyrE subfamily. As to quaternary structure, homodimer. Mg(2+) serves as cofactor.

The enzyme catalyses orotidine 5'-phosphate + diphosphate = orotate + 5-phospho-alpha-D-ribose 1-diphosphate. It participates in pyrimidine metabolism; UMP biosynthesis via de novo pathway; UMP from orotate: step 1/2. Catalyzes the transfer of a ribosyl phosphate group from 5-phosphoribose 1-diphosphate to orotate, leading to the formation of orotidine monophosphate (OMP). The sequence is that of Orotate phosphoribosyltransferase from Pseudomonas putida (strain GB-1).